Consider the following 194-residue polypeptide: Large ribosomal subunit protein uL6m (194 aa).

Belongs to the universal ribosomal protein uL6 family.

The protein localises to the mitochondrion. The sequence is that of Large ribosomal subunit protein uL6m (RPL6) from Prototheca wickerhamii.